The sequence spans 246 residues: Large ribosomal subunit protein uL3 (246 aa).

2 disordered regions span residues 140–162 and 214–246; these read SHRS…NKKM and ADVP…EENA. The residue at position 151 (Q151) is an N5-methylglutamine. A compositionally biased stretch (low complexity) spans 234–246; it reads EAAPEAPASEENA.

This sequence belongs to the universal ribosomal protein uL3 family. As to quaternary structure, part of the 50S ribosomal subunit. Forms a cluster with proteins L14 and L19. In terms of processing, methylated by PrmB.

One of the primary rRNA binding proteins, it binds directly near the 3'-end of the 23S rRNA, where it nucleates assembly of the 50S subunit. This chain is Large ribosomal subunit protein uL3, found in Methylorubrum extorquens (strain CM4 / NCIMB 13688) (Methylobacterium extorquens).